A 460-amino-acid chain; its full sequence is Mitochondrial distribution and morphology protein 10 (460 aa).

This sequence belongs to the MDM10 family. In terms of assembly, component of the ER-mitochondria encounter structure (ERMES) or MDM complex, composed of MMM1, MDM10, MDM12 and MDM34. Associates with the mitochondrial outer membrane sorting assembly machinery SAM(core) complex.

The protein localises to the mitochondrion outer membrane. Its function is as follows. Component of the ERMES/MDM complex, which serves as a molecular tether to connect the endoplasmic reticulum and mitochondria. Components of this complex are involved in the control of mitochondrial shape and protein biogenesis and may function in phospholipid exchange. MDM10 is involved in the late assembly steps of the general translocase of the mitochondrial outer membrane (TOM complex). Functions in the TOM40-specific route of the assembly of outer membrane beta-barrel proteins, including the association of TOM40 with the receptor TOM22 and small TOM proteins. Can associate with the SAM(core) complex as well as the MDM12-MMM1 complex, both involved in late steps of the major beta-barrel assembly pathway, that is responsible for biogenesis of all outer membrane beta-barrel proteins. May act as a switch that shuttles between both complexes and channels precursor proteins into the TOM40-specific pathway. Plays a role in mitochondrial morphology and in the inheritance of mitochondria. The chain is Mitochondrial distribution and morphology protein 10 from Candida glabrata (strain ATCC 2001 / BCRC 20586 / JCM 3761 / NBRC 0622 / NRRL Y-65 / CBS 138) (Yeast).